The following is a 311-amino-acid chain: Methionyl-tRNA formyltransferase (311 aa).

110–113 (SLLP) contributes to the (6S)-5,6,7,8-tetrahydrofolate binding site.

It belongs to the Fmt family.

The enzyme catalyses L-methionyl-tRNA(fMet) + (6R)-10-formyltetrahydrofolate = N-formyl-L-methionyl-tRNA(fMet) + (6S)-5,6,7,8-tetrahydrofolate + H(+). Functionally, attaches a formyl group to the free amino group of methionyl-tRNA(fMet). The formyl group appears to play a dual role in the initiator identity of N-formylmethionyl-tRNA by promoting its recognition by IF2 and preventing the misappropriation of this tRNA by the elongation apparatus. The sequence is that of Methionyl-tRNA formyltransferase from Streptococcus agalactiae serotype Ia (strain ATCC 27591 / A909 / CDC SS700).